Consider the following 361-residue polypeptide: 3-dehydroquinate synthase (361 aa).

The protein belongs to the archaeal-type DHQ synthase family.

The enzyme catalyses 2-amino-2,3,7-trideoxy-D-lyxo-hept-6-ulosonate + NAD(+) + H2O = 3-dehydroquinate + NH4(+) + NADH + H(+). Functionally, catalyzes the oxidative deamination and cyclization of 2-amino-3,7-dideoxy-D-threo-hept-6-ulosonic acid (ADH) to yield 3-dehydroquinate (DHQ), which is fed into the canonical shikimic pathway of aromatic amino acid biosynthesis. This Methanococcus maripaludis (strain C7 / ATCC BAA-1331) protein is 3-dehydroquinate synthase.